Consider the following 559-residue polypeptide: Actin-binding protein WASF1 (559 aa).

3 disordered regions span residues 170–202, 304–383, and 412–490; these read EDKR…DRRR, IENR…GVLH, and VHPL…HPST. Over residues 182–202 the composition is skewed to basic and acidic residues; it reads KNLDRPHEPEKVPRAPHDRRR. A compositionally biased stretch (polar residues) spans 304-313; the sequence is IENRPQSPAT. Positions 322-332 are enriched in pro residues; the sequence is PTPPPPPPPLP. A compositionally biased stretch (low complexity) spans 333–346; that stretch reads SALSTSSLRASMTS. An Asymmetric dimethylarginine; alternate modification is found at arginine 341. Residue arginine 341 is modified to Omega-N-methylarginine; alternate. Pro residues-rich tracts occupy residues 347–360, 423–437, and 460–477; these read TPPP…PPPA, LPPP…PPGI, and STAP…PPSQ. Residue serine 489 is modified to Phosphoserine. In terms of domain architecture, WH2 spans 497 to 514; that stretch reads ARSVLLEAIRKGIQLRKV.

It belongs to the SCAR/WAVE family. As to quaternary structure, component of the WAVE1 complex composed of ABI2, CYFIP1 or CYFIP2, BRK1, NCKAP1 and WASF1/WAVE1. Within the complex, a heterodimer containing NCKAP1 and CYFIP1 interacts with a heterotrimer formed by WAVE1, ABI2 and BRK1. CYFIP2 binds to activated RAC1 which causes the complex to dissociate, releasing activated WASF1. The complex can also be activated by NCK1. Binds actin and the Arp2/3 complex. Interacts with BAIAP2. Interacts with SHANK3; the interaction mediates the association of SHANK3 with the WAVE1 complex. Interacts with ABI1 (via N-terminus). Interacts with SORBS2; this interaction greatly enhances phosphorylation by ABL1 and dephosphorylation by PTPN12 and might mediate partial to focal adhesion sites.

The protein localises to the cytoplasm. The protein resides in the cytoskeleton. It localises to the synapse. Its subcellular location is the cell junction. It is found in the focal adhesion. In terms of biological role, downstream effector molecule involved in the transmission of signals from tyrosine kinase receptors and small GTPases to the actin cytoskeleton. Promotes formation of actin filaments. Part of the WAVE complex that regulates lamellipodia formation. The WAVE complex regulates actin filament reorganization via its interaction with the Arp2/3 complex. As component of the WAVE1 complex, required for BDNF-NTRK2 endocytic trafficking and signaling from early endosomes. Also involved in the regulation of mitochondrial dynamics. This is Actin-binding protein WASF1 (WASF1) from Pongo abelii (Sumatran orangutan).